Reading from the N-terminus, the 458-residue chain is Transmembrane protein adipocyte-associated 1 homolog (458 aa).

Asn-21 and Asn-45 each carry an N-linked (GlcNAc...) asparagine glycan. Helical transmembrane passes span 81–101 (VILV…GSVI), 114–134 (AFTL…AYSM), 152–172 (IIIK…GLLF), 181–201 (ILIA…VQVI), 225–245 (FLFW…IMCL), 263–283 (LIYC…AALI), and 291–311 (LCFV…IIYF). N-linked (GlcNAc...) asparagine glycosylation is found at Asn-323 and Asn-324. The segment at 409–458 (RTGSDDYAHHRDSMLSEPSTGTTTRHLKGLGPQGSLVFEDDPSSLTSLRM) is disordered. A compositionally biased stretch (basic and acidic residues) spans 411-422 (GSDDYAHHRDSM).

It belongs to the UPF0359 family.

The protein resides in the membrane. This chain is Transmembrane protein adipocyte-associated 1 homolog (tpra-1), found in Caenorhabditis elegans.